The sequence spans 220 residues: uncharacterized protein (220 aa).

Helical transmembrane passes span 25–45 (YFLL…SMSL), 50–70 (PGLI…YKLS), 74–94 (LGIL…GPIL), 105–125 (IVVL…AYVL), 135–155 (SGTI…SFFF), 158–178 (PMLY…GILY), and 196–216 (VSIF…FSIL).

The protein belongs to the BI1 family.

Its subcellular location is the cell membrane. This is an uncharacterized protein from Pasteurella multocida (strain Pm70).